Reading from the N-terminus, the 273-residue chain is NAD(P)H-hydrate epimerase (273 aa).

The YjeF N-terminal domain maps to Ala18–Glu257. Residue Asn71 to Asp75 participates in (6S)-NADPHX binding. Residues Asn72 and Asp146 each contribute to the K(+) site. Residues Gly150–Pro157, Tyr162, and Asp188 each bind (6S)-NADPHX. Residue Ser191 participates in K(+) binding.

The protein belongs to the NnrE/AIBP family. The cofactor is K(+).

It catalyses the reaction (6R)-NADHX = (6S)-NADHX. The catalysed reaction is (6R)-NADPHX = (6S)-NADPHX. Functionally, catalyzes the epimerization of the S- and R-forms of NAD(P)HX, a damaged form of NAD(P)H that is a result of enzymatic or heat-dependent hydration. This is a prerequisite for the S-specific NAD(P)H-hydrate dehydratase to allow the repair of both epimers of NAD(P)HX. This is NAD(P)H-hydrate epimerase from Giardia intestinalis (strain ATCC 50803 / WB clone C6) (Giardia lamblia).